The primary structure comprises 128 residues: Probable 4-amino-4-deoxy-L-arabinose-phosphoundecaprenol flippase subunit ArnF (128 aa).

Topologically, residues 1-2 (MG) are cytoplasmic. Residues 3-23 (LIWGLFSVIIASVAQLSLGFA) traverse the membrane as a helical segment. Topologically, residues 24 to 35 (ASHLPPMTHLWD) are periplasmic. Residues 36-56 (FIAALLAFGLDARILLLGLLG) traverse the membrane as a helical segment. The Cytoplasmic portion of the chain corresponds to 57-75 (YLLSVFCWYKTLHKLALSK). A helical membrane pass occupies residues 76–96 (AYALLSMSYVLVWIASMVLPG). Residues 97 to 100 (REGT) lie on the Periplasmic side of the membrane. A helical transmembrane segment spans residues 101 to 121 (FSLKALLGVACIMSGLMLIFL). Topologically, residues 122–128 (PTTKQRY) are cytoplasmic.

This sequence belongs to the ArnF family. In terms of assembly, heterodimer of ArnE and ArnF.

It localises to the cell inner membrane. The protein operates within bacterial outer membrane biogenesis; lipopolysaccharide biosynthesis. Functionally, translocates 4-amino-4-deoxy-L-arabinose-phosphoundecaprenol (alpha-L-Ara4N-phosphoundecaprenol) from the cytoplasmic to the periplasmic side of the inner membrane. This chain is Probable 4-amino-4-deoxy-L-arabinose-phosphoundecaprenol flippase subunit ArnF, found in Shigella flexneri serotype 5b (strain 8401).